Reading from the N-terminus, the 408-residue chain is uncharacterized protein (408 aa).

The next 12 helical transmembrane spans lie at 9–29 (WFVL…RNSF), 49–69 (VSVS…GFFI), 77–97 (IMAL…YSPN), 100–120 (VFSA…VGVT), 135–155 (LALA…SPIW), 167–187 (TYTI…VFGM), 216–236 (LIHI…IIDA), 252–272 (GMMA…GWLS), 283–303 (SILF…ILGI), 308–328 (LWYF…IPLT), 340–360 (LIGS…ALSV), and 373–393 (YLLI…IELV).

It belongs to the major facilitator superfamily.

The protein localises to the cell membrane. This is an uncharacterized protein from Bacillus subtilis (strain 168).